Consider the following 749-residue polypeptide: 1,4-alpha-glucan branching enzyme GlgB (749 aa).

Residue Asp-427 is the Nucleophile of the active site. Residue Glu-480 is the Proton donor of the active site.

This sequence belongs to the glycosyl hydrolase 13 family. GlgB subfamily. As to quaternary structure, monomer.

The enzyme catalyses Transfers a segment of a (1-&gt;4)-alpha-D-glucan chain to a primary hydroxy group in a similar glucan chain.. It functions in the pathway glycan biosynthesis; glycogen biosynthesis. Its function is as follows. Catalyzes the formation of the alpha-1,6-glucosidic linkages in glycogen by scission of a 1,4-alpha-linked oligosaccharide from growing alpha-1,4-glucan chains and the subsequent attachment of the oligosaccharide to the alpha-1,6 position. This Thermobifida fusca (strain YX) protein is 1,4-alpha-glucan branching enzyme GlgB.